The chain runs to 71 residues: UPF0352 protein Spea_1764 (71 aa).

It belongs to the UPF0352 family.

This Shewanella pealeana (strain ATCC 700345 / ANG-SQ1) protein is UPF0352 protein Spea_1764.